Here is a 571-residue protein sequence, read N- to C-terminus: Dihydroxy-acid dehydratase (571 aa).

C56 contributes to the [2Fe-2S] cluster binding site. A Mg(2+)-binding site is contributed by D88. C129 lines the [2Fe-2S] cluster pocket. Mg(2+) is bound by residues D130 and K131. Residue K131 is modified to N6-carboxylysine. Position 201 (C201) interacts with [2Fe-2S] cluster. E452 is a binding site for Mg(2+). Catalysis depends on S478, which acts as the Proton acceptor.

This sequence belongs to the IlvD/Edd family. In terms of assembly, homodimer. [2Fe-2S] cluster serves as cofactor. Requires Mg(2+) as cofactor.

It carries out the reaction (2R)-2,3-dihydroxy-3-methylbutanoate = 3-methyl-2-oxobutanoate + H2O. The enzyme catalyses (2R,3R)-2,3-dihydroxy-3-methylpentanoate = (S)-3-methyl-2-oxopentanoate + H2O. It functions in the pathway amino-acid biosynthesis; L-isoleucine biosynthesis; L-isoleucine from 2-oxobutanoate: step 3/4. It participates in amino-acid biosynthesis; L-valine biosynthesis; L-valine from pyruvate: step 3/4. In terms of biological role, functions in the biosynthesis of branched-chain amino acids. Catalyzes the dehydration of (2R,3R)-2,3-dihydroxy-3-methylpentanoate (2,3-dihydroxy-3-methylvalerate) into 2-oxo-3-methylpentanoate (2-oxo-3-methylvalerate) and of (2R)-2,3-dihydroxy-3-methylbutanoate (2,3-dihydroxyisovalerate) into 2-oxo-3-methylbutanoate (2-oxoisovalerate), the penultimate precursor to L-isoleucine and L-valine, respectively. This chain is Dihydroxy-acid dehydratase, found in Streptococcus mutans serotype c (strain ATCC 700610 / UA159).